The chain runs to 1434 residues: Ankyrin and armadillo repeat-containing protein (1434 aa).

The chain crosses the membrane as a helical span at residues 309–329 (IRRGIGYLKLICFLIPFLLSL). 5 ANK repeats span residues 532 to 561 (AGYTIFHHAALHNRVSIICQLCNANFKVNQ), 569 to 598 (QGPTPLHLAAQACSLETTVCLLCSKADYTL), 602 to 631 (RGWMPIHFAAFYDNVCIIIALCRKDPSLLE), 638 to 667 (NQCTPLLLAATSGALDTIQYLFSIGANWRK), and 671 to 701 (KGNNIIHLSVLTFHTEVLKYIIKLNIPELPV). ARM repeat units lie at residues 732–771 (DQYWRCILDAGTIPALINLLKSSKIKLQCKTVGLLSNIST), 773–812 (KSAVHALVEAGGIPSLINLLVCDEPEVHSRCAVILYDIAQ), 814–852 (ENKDVIAKYNGIPSLINLLNLNIENVLVNVMNCIRVLCI), 855–894 (ENNQRAVREHKGLPYLIRFLSSDSDVLKAVSSAAIAEVGR), 897–936 (KEIQDAIAMEGAIPPLVALFKGKQISVQMKGAMAVESLAS), and 1072–1112 (PVSQ…CIVL).

As to expression, ubiquitously expressed with highest level in pancreas and lowest in skeletal muscle.

The protein resides in the membrane. The protein is Ankyrin and armadillo repeat-containing protein (ANKAR) of Homo sapiens (Human).